A 351-amino-acid chain; its full sequence is D-alanine--D-alanine ligase (351 aa).

Residues 135 to 343 (NQIFLQSGQK…MEEVFSDLIE (209 aa)) enclose the ATP-grasp domain. 167–222 (LETLGFPQFLKPVEGGSSVSVYKITNREQLKEKLALIFESDSKVMSQSFLTGIEVS) provides a ligand contact to ATP. 3 residues coordinate Mg(2+): Asp298, Glu310, and Asn312.

Belongs to the D-alanine--D-alanine ligase family. Requires Mg(2+) as cofactor. Mn(2+) is required as a cofactor.

It localises to the cytoplasm. The enzyme catalyses 2 D-alanine + ATP = D-alanyl-D-alanine + ADP + phosphate + H(+). The protein operates within cell wall biogenesis; peptidoglycan biosynthesis. Cell wall formation. The sequence is that of D-alanine--D-alanine ligase from Leptospira interrogans serogroup Icterohaemorrhagiae serovar copenhageni (strain Fiocruz L1-130).